A 331-amino-acid polypeptide reads, in one-letter code: Serine/threonine-protein phosphatase 6 catalytic subunit (331 aa).

Residues D79, H81, D107, and N139 each coordinate Mn(2+). Catalysis depends on H140, which acts as the Proton donor. Positions 189 and 264 each coordinate Mn(2+).

Belongs to the PPP phosphatase family. PP-6 (PP-V) subfamily. As to quaternary structure, forms a complex composed of catalytic subunit pph-6 and regulatory subunit saps-1; the interaction increases pph-6 and saps-1 protein stability. The cofactor is Mn(2+).

The protein resides in the cytoplasm. It is found in the cell cortex. The protein localises to the cytoskeleton. Its subcellular location is the spindle pole. It catalyses the reaction O-phospho-L-seryl-[protein] + H2O = L-seryl-[protein] + phosphate. The catalysed reaction is O-phospho-L-threonyl-[protein] + H2O = L-threonyl-[protein] + phosphate. In terms of biological role, catalytic subunit of protein phosphatase 6 (PP6). In complex with saps-1, promotes actomyosin contractility during cytokinesis by regulating the organization of cortical non-muscle myosin II nmy-2 and thus contributing to correct spindle positioning. Also required for the proper generation of pulling forces on spindle poles during anaphase by regulating the cortical localization of gpr-1, gpr-2 and lin-5. The protein is Serine/threonine-protein phosphatase 6 catalytic subunit of Caenorhabditis elegans.